A 729-amino-acid chain; its full sequence is Fatty acid oxidation complex subunit alpha (729 aa).

Positions 1 to 189 (MLYKGDTLYL…KIGLVDGVVA (189 aa)) are enoyl-CoA hydratase/isomerase. Asp296 lines the substrate pocket. The 3-hydroxyacyl-CoA dehydrogenase stretch occupies residues 311–729 (ETPKHAAVLG…ARPVGALKTA (419 aa)). Residues Met324, Asp343, 400–402 (VVE), Lys407, and Ser429 contribute to the NAD(+) site. His450 (for 3-hydroxyacyl-CoA dehydrogenase activity) is an active-site residue. Asn453 serves as a coordination point for NAD(+). Substrate is bound by residues Asn500 and Tyr660.

This sequence in the N-terminal section; belongs to the enoyl-CoA hydratase/isomerase family. The protein in the C-terminal section; belongs to the 3-hydroxyacyl-CoA dehydrogenase family. As to quaternary structure, heterotetramer of two alpha chains (FadB) and two beta chains (FadA).

It catalyses the reaction a (3S)-3-hydroxyacyl-CoA + NAD(+) = a 3-oxoacyl-CoA + NADH + H(+). The enzyme catalyses a (3S)-3-hydroxyacyl-CoA = a (2E)-enoyl-CoA + H2O. It carries out the reaction a 4-saturated-(3S)-3-hydroxyacyl-CoA = a (3E)-enoyl-CoA + H2O. The catalysed reaction is (3S)-3-hydroxybutanoyl-CoA = (3R)-3-hydroxybutanoyl-CoA. It catalyses the reaction a (3Z)-enoyl-CoA = a 4-saturated (2E)-enoyl-CoA. The enzyme catalyses a (3E)-enoyl-CoA = a 4-saturated (2E)-enoyl-CoA. It participates in lipid metabolism; fatty acid beta-oxidation. Its function is as follows. Involved in the aerobic and anaerobic degradation of long-chain fatty acids via beta-oxidation cycle. Catalyzes the formation of 3-oxoacyl-CoA from enoyl-CoA via L-3-hydroxyacyl-CoA. It can also use D-3-hydroxyacyl-CoA and cis-3-enoyl-CoA as substrate. This Klebsiella pneumoniae (strain 342) protein is Fatty acid oxidation complex subunit alpha.